Reading from the N-terminus, the 629-residue chain is tRNA uridine 5-carboxymethylaminomethyl modification enzyme MnmG (629 aa).

13–18 (GGGHAG) contributes to the FAD binding site. Residue 273–287 (GPRYCPSIEDKITRF) coordinates NAD(+).

The protein belongs to the MnmG family. Homodimer. Heterotetramer of two MnmE and two MnmG subunits. It depends on FAD as a cofactor.

Its subcellular location is the cytoplasm. In terms of biological role, NAD-binding protein involved in the addition of a carboxymethylaminomethyl (cmnm) group at the wobble position (U34) of certain tRNAs, forming tRNA-cmnm(5)s(2)U34. The sequence is that of tRNA uridine 5-carboxymethylaminomethyl modification enzyme MnmG from Aeromonas hydrophila subsp. hydrophila (strain ATCC 7966 / DSM 30187 / BCRC 13018 / CCUG 14551 / JCM 1027 / KCTC 2358 / NCIMB 9240 / NCTC 8049).